The chain runs to 241 residues: Probable transcriptional regulatory protein FMG_0893 (241 aa).

This sequence belongs to the TACO1 family.

Its subcellular location is the cytoplasm. This is Probable transcriptional regulatory protein FMG_0893 from Finegoldia magna (strain ATCC 29328 / DSM 20472 / WAL 2508) (Peptostreptococcus magnus).